The primary structure comprises 314 residues: Olfactory receptor 9A4 (314 aa).

Residues 1–24 (MLMNYSSATEFYLLGFPGSEELHH) lie on the Extracellular side of the membrane. The N-linked (GlcNAc...) asparagine glycan is linked to Asn-4. Residues 25-45 (ILFAIFFFFYLVTLMGNTVII) form a helical membrane-spanning segment. At 46-53 (MIVCVDKR) the chain is on the cytoplasmic side. Residues 54–74 (LQSPMYFFLGHLSALEILVTT) traverse the membrane as a helical segment. The Extracellular segment spans residues 75–99 (IIVPVMLWGLLLPGMQTIYLSACVV). Cys-97 and Cys-189 are disulfide-bonded. The helical transmembrane segment at 100–120 (QLFLYLAVGTTEFALLGAMAV) threads the bilayer. Topologically, residues 121-139 (DRYVAVCNPLRYNIIMNRH) are cytoplasmic. The chain crosses the membrane as a helical span at residues 140–160 (TCNFVVLVSWVFGFLFQIWPV). Topologically, residues 161–197 (YVMFQLTYCKSNVVNNFFCDRGQLLKLSCNNTLFTEF) are extracellular. Residue Asn-190 is glycosylated (N-linked (GlcNAc...) asparagine). The helical transmembrane segment at 198-217 (ILFLMAVFVLFGSLIPTIVS) threads the bilayer. Over 218 to 237 (NAYIISTILKIPSSSGRRKS) the chain is Cytoplasmic. The helical transmembrane segment at 238-258 (FSTCASHFTCVVIGYGSCLFL) threads the bilayer. The Extracellular segment spans residues 259–271 (YVKPKQTQAADYN). Residues 272 to 292 (WVVSLMVSVVTPFLNPFIFTL) traverse the membrane as a helical segment. The Cytoplasmic segment spans residues 293-314 (RNDKVIEALRDGVKRCCQLFRN).

It belongs to the G-protein coupled receptor 1 family.

The protein localises to the cell membrane. Its function is as follows. Odorant receptor. This chain is Olfactory receptor 9A4 (OR9A4), found in Homo sapiens (Human).